We begin with the raw amino-acid sequence, 211 residues long: Large ribosomal subunit protein uL4 (211 aa).

Residues 41-53 (QAHSRQGTASTLT) show a composition bias toward polar residues. The segment at 41-85 (QAHSRQGTASTLTRAEVRGGGRKPYKQKGTGRARQGSIRTPLRPG) is disordered. The span at 60-71 (GGRKPYKQKGTG) shows a compositional bias: basic residues.

This sequence belongs to the universal ribosomal protein uL4 family. In terms of assembly, part of the 50S ribosomal subunit.

One of the primary rRNA binding proteins, this protein initially binds near the 5'-end of the 23S rRNA. It is important during the early stages of 50S assembly. It makes multiple contacts with different domains of the 23S rRNA in the assembled 50S subunit and ribosome. In terms of biological role, forms part of the polypeptide exit tunnel. This chain is Large ribosomal subunit protein uL4, found in Prochlorococcus marinus (strain SARG / CCMP1375 / SS120).